Here is a 274-residue protein sequence, read N- to C-terminus: uncharacterized protein (274 aa).

The signal sequence occupies residues 1–30; that stretch reads MTVYTPTSERQAPATTHRQMWALGDYAAIA.

This sequence to M.tuberculosis Rv1405c.

This is an uncharacterized protein from Mycobacterium tuberculosis (strain CDC 1551 / Oshkosh).